The chain runs to 730 residues: MGRRKKMVERVTALMSNPLMIRNIGIVAHIDHGKTTLSDNLLAGAGMISKELAGRQLFMDSDAEEQERGITIDSSNVSMVHEYEGKEYLINLIDTPGHVDFGGDVTRAMRAVDGAVVVIDAVEGTMPQTETVLRQALKEHVKPVLFINKVDRLINELQVDDQEMQIRLGKLIDHVNKLIKGMNEERYNAGWRVDAAEGTVAFGSALYNWAISVPMMKKTGVSFSEVFNYCREEDMKSLAEKCPLHEAVNDMVIRFLPSPIDAQKGRVGAIWHGDHESGIGKQMSVADAKGDVAFMVTDISMDPHAGEVSTGRLFSGSLSRGMEVYVSGASKTNRIQQVGVFMGPERLEVDAIPAGNIAAVTGLRDAFVGATVTTLEGMEPFESIKHASEPVVTVAVEAKHMKDLPKLVEVLRQVAKEDPTLKITLDEETGEHLMAGMGELHLEVIAHRIERDKGVEITTTPPLVVYRETITGTAGPVEGKSPNRHNRFYVIVEPLEPEVRELIRNDEISMRMPEVERREKLMAAGLNKDEAKKIVNIFESNAYFDMTKGIQYLNETMELIIEGFTEVMKAGPLSKEPCMGVKVKLMDAKLHEDAVHRGPAQVIPASRQAIQAAMLMADDTLFEPYQKVFIQVPQEQMGGATKEIQGRRGVIIDMTSEGDTTVIESKAPVSELFGFAGDIRSATEGRAMWSTEFAGFEPLPMSLMTEVVTGIRKRKGLKAALPQAEDFMSM.

In terms of domain architecture, tr-type G spans 19 to 229 (LMIRNIGIVA…GVSFSEVFNY (211 aa)). GTP-binding positions include 28–35 (AHIDHGKT), 94–98 (DTPGH), and 148–151 (NKVD). A Diphthamide modification is found at His-596.

This sequence belongs to the TRAFAC class translation factor GTPase superfamily. Classic translation factor GTPase family. EF-G/EF-2 subfamily.

It is found in the cytoplasm. Catalyzes the GTP-dependent ribosomal translocation step during translation elongation. During this step, the ribosome changes from the pre-translocational (PRE) to the post-translocational (POST) state as the newly formed A-site-bound peptidyl-tRNA and P-site-bound deacylated tRNA move to the P and E sites, respectively. Catalyzes the coordinated movement of the two tRNA molecules, the mRNA and conformational changes in the ribosome. This chain is Elongation factor 2 (fusA), found in Methanococcoides burtonii (strain DSM 6242 / NBRC 107633 / OCM 468 / ACE-M).